Reading from the N-terminus, the 435-residue chain is Histidine--tRNA ligase (435 aa).

Residues 415-435 (SVPLSAFPGDYDRPTFEDFAE) are disordered. The span at 424 to 435 (DYDRPTFEDFAE) shows a compositional bias: basic and acidic residues.

The protein belongs to the class-II aminoacyl-tRNA synthetase family.

Its subcellular location is the cytoplasm. It catalyses the reaction tRNA(His) + L-histidine + ATP = L-histidyl-tRNA(His) + AMP + diphosphate + H(+). In Haloarcula marismortui (strain ATCC 43049 / DSM 3752 / JCM 8966 / VKM B-1809) (Halobacterium marismortui), this protein is Histidine--tRNA ligase.